Here is a 125-residue protein sequence, read N- to C-terminus: Allatostatin (125 aa).

Residues 1-26 (MKTSAYNVYLGVVAAMLALLFVTINA) form the signal peptide. The propeptide occupies 27-106 (APMEADDETA…SRLARQWRAD (80 aa)). Gln109 carries the pyrrolidone carboxylic acid modification.

It belongs to the allatostatin family.

The protein localises to the secreted. Its function is as follows. Strongly inhibits juvenile hormone biosynthesis in vitro by the corpora allata from fifth-stadium larvae and adult females. This chain is Allatostatin, found in Spodoptera frugiperda (Fall armyworm).